Consider the following 75-residue polypeptide: Small ribosomal subunit protein bS18 (75 aa).

The protein belongs to the bacterial ribosomal protein bS18 family. In terms of assembly, part of the 30S ribosomal subunit. Forms a tight heterodimer with protein bS6.

Functionally, binds as a heterodimer with protein bS6 to the central domain of the 16S rRNA, where it helps stabilize the platform of the 30S subunit. The protein is Small ribosomal subunit protein bS18 of Shewanella amazonensis (strain ATCC BAA-1098 / SB2B).